The following is a 211-amino-acid chain: Pyridoxine/pyridoxamine 5'-phosphate oxidase (211 aa).

Substrate contacts are provided by residues 7 to 10 (RREY) and lysine 65. Residues 60 to 65 (RIVLLK), 75 to 76 (YT), arginine 81, lysine 82, and glutamine 104 each bind FMN. Substrate is bound by residues tyrosine 122, arginine 126, and serine 130. FMN-binding positions include 139 to 140 (QS) and tryptophan 184. 190–192 (RLH) serves as a coordination point for substrate. Position 194 (arginine 194) interacts with FMN.

This sequence belongs to the pyridoxamine 5'-phosphate oxidase family. In terms of assembly, homodimer. FMN serves as cofactor.

The catalysed reaction is pyridoxamine 5'-phosphate + O2 + H2O = pyridoxal 5'-phosphate + H2O2 + NH4(+). It carries out the reaction pyridoxine 5'-phosphate + O2 = pyridoxal 5'-phosphate + H2O2. Its pathway is cofactor metabolism; pyridoxal 5'-phosphate salvage; pyridoxal 5'-phosphate from pyridoxamine 5'-phosphate: step 1/1. It participates in cofactor metabolism; pyridoxal 5'-phosphate salvage; pyridoxal 5'-phosphate from pyridoxine 5'-phosphate: step 1/1. Catalyzes the oxidation of either pyridoxine 5'-phosphate (PNP) or pyridoxamine 5'-phosphate (PMP) into pyridoxal 5'-phosphate (PLP). In Vibrio campbellii (strain ATCC BAA-1116), this protein is Pyridoxine/pyridoxamine 5'-phosphate oxidase.